A 180-amino-acid chain; its full sequence is Protein SPMIP9 (180 aa).

Microtubule inner protein component of sperm flagellar doublet microtubules. In terms of tissue distribution, testis-specific. Detected in the germ cell lineage at all stages.

It is found in the nucleus. It localises to the cytoplasm. The protein localises to the cytoskeleton. The protein resides in the flagellum axoneme. In terms of biological role, microtubule inner protein (MIP) part of the dynein-decorated doublet microtubules (DMTs) in flagella axoneme. The chain is Protein SPMIP9 from Homo sapiens (Human).